A 414-amino-acid chain; its full sequence is tRNA N6-adenosine threonylcarbamoyltransferase, mitochondrial (414 aa).

The transit peptide at 1–29 directs the protein to the mitochondrion; sequence MLMLRRTAGAIPKPPKSKVYGFLRRFSVH. Residues Lys-74 and Lys-140 each carry the N6-acetyllysine modification. 2 residues coordinate a divalent metal cation: His-147 and His-151. Residues 169 to 173 and Asp-202 contribute to the substrate site; that span reads LISGG. Lys-203 is modified (N6-acetyllysine). Residues Gly-222 and Glu-226 each coordinate substrate. An N6-acetyllysine mark is found at Lys-230 and Lys-299. Residues 329-330 and Thr-357 contribute to the substrate site; that span reads SN. An a divalent metal cation-binding site is contributed by Asp-358.

The protein belongs to the KAE1 / TsaD family. As to quaternary structure, monomer. It depends on a divalent metal cation as a cofactor.

The protein localises to the mitochondrion. The catalysed reaction is L-threonylcarbamoyladenylate + adenosine(37) in tRNA = N(6)-L-threonylcarbamoyladenosine(37) in tRNA + AMP + H(+). Required for the formation of a threonylcarbamoyl group on adenosine at position 37 (t(6)A37) in mitochondrial tRNAs that read codons beginning with adenine. Probably involved in the transfer of the threonylcarbamoyl moiety of threonylcarbamoyl-AMP (TC-AMP) to the N6 group of A37. Involved in mitochondrial genome maintenance. The chain is tRNA N6-adenosine threonylcarbamoyltransferase, mitochondrial from Mus musculus (Mouse).